The sequence spans 355 residues: Glycerol-1-phosphate dehydrogenase [NAD(P)+] (355 aa).

Residues 101–105 (GKSID) and 123–126 (TAAS) each bind NAD(+). A substrate-binding site is contributed by aspartate 128. Position 132 (serine 132) interacts with NAD(+). Aspartate 175 contacts substrate. Residues aspartate 175 and histidine 255 each coordinate Zn(2+). Residue histidine 259 coordinates substrate. A Zn(2+)-binding site is contributed by histidine 271.

This sequence belongs to the glycerol-1-phosphate dehydrogenase family. In terms of assembly, homodimer. The cofactor is Zn(2+).

The protein localises to the cytoplasm. The catalysed reaction is sn-glycerol 1-phosphate + NAD(+) = dihydroxyacetone phosphate + NADH + H(+). It carries out the reaction sn-glycerol 1-phosphate + NADP(+) = dihydroxyacetone phosphate + NADPH + H(+). It functions in the pathway membrane lipid metabolism; glycerophospholipid metabolism. Catalyzes the NAD(P)H-dependent reduction of dihydroxyacetonephosphate (DHAP or glycerone phosphate) to glycerol 1-phosphate (G1P). The G1P thus generated is used as the glycerophosphate backbone of phospholipids in the cellular membranes of Archaea. This Staphylothermus marinus (strain ATCC 43588 / DSM 3639 / JCM 9404 / F1) protein is Glycerol-1-phosphate dehydrogenase [NAD(P)+].